A 298-amino-acid polypeptide reads, in one-letter code: Inosose dehydratase (298 aa).

The protein belongs to the IolE/MocC family. Glutathione is required as a cofactor. Requires Co(2+) as cofactor. Mn(2+) serves as cofactor.

It catalyses the reaction scyllo-inosose = 3D-3,5/4-trihydroxycyclohexane-1,2-dione + H2O. Its pathway is polyol metabolism; myo-inositol degradation into acetyl-CoA; acetyl-CoA from myo-inositol: step 2/7. Functionally, catalyzes the dehydration of inosose (2-keto-myo-inositol, 2KMI or 2,4,6/3,5-pentahydroxycyclohexanone) to 3D-(3,5/4)-trihydroxycyclohexane-1,2-dione (D-2,3-diketo-4-deoxy-epi-inositol). The sequence is that of Inosose dehydratase from Bacillus velezensis (strain DSM 23117 / BGSC 10A6 / LMG 26770 / FZB42) (Bacillus amyloliquefaciens subsp. plantarum).